Consider the following 1174-residue polypeptide: Pecanex-like protein 4 (1174 aa).

The next 14 helical transmembrane spans lie at 40–60, 72–92, 140–160, 173–193, 217–237, 244–264, 284–304, 307–327, 366–386, 394–414, 451–471, 543–563, 580–600, and 643–663; these read IYVN…TGTL, AAAL…LISV, TVFH…YLLP, TAVL…SLIV, LYIF…NIPA, ILHI…LPPP, SMST…AAVV, FIPS…LLSL, FLFI…HHYV, SGAQ…VWIL, IGAV…VAFL, LIQF…LWTE, VFAP…SPLL, and LTAA…LPGS. A compositionally biased stretch (polar residues) spans 785 to 797; it reads PSTQENKTENTGE. The segment at 785-875 is disordered; it reads PSTQENKTEN…DDHSAGTGPK (91 aa). Residue N790 is glycosylated (N-linked (GlcNAc...) asparagine). Over residues 798-810 the composition is skewed to low complexity; it reads ASPALPPAANSSP. Residues 835 to 846 show a composition bias toward basic and acidic residues; the sequence is PAIKNRKEKLQS. N1122 and N1149 each carry an N-linked (GlcNAc...) asparagine glycan.

This sequence belongs to the pecanex family.

It is found in the membrane. This Mus musculus (Mouse) protein is Pecanex-like protein 4.